Reading from the N-terminus, the 506-residue chain is Gamma-aminobutyric acid receptor subunit epsilon (506 aa).

An N-terminal signal peptide occupies residues 1-22; that stretch reads MLSKVLPVLLGILLILQSRVEG. Positions 23 to 66 are disordered; that stretch reads PQTESKNEASSRDVVYGPQPQPLENQLLSEETKSTETETGSRVG. The Extracellular segment spans residues 23 to 280; the sequence is PQTESKNEAS…FNVSRRFGYV (258 aa). The N-linked (GlcNAc...) asparagine glycan is linked to Asn-134. Residues Cys-195 and Cys-209 are joined by a disulfide bond. A glycan (N-linked (GlcNAc...) asparagine) is linked at Asn-252. The chain crosses the membrane as a helical span at residues 281–301; it reads AFQNYVPSSVTTMLSWVSFWI. Topologically, residues 302–307 are cytoplasmic; the sequence is KTESAP. The chain crosses the membrane as a helical span at residues 308 to 327; it reads ARTSLGITSVLTMTTLGTFS. At 328–343 the chain is on the extracellular side; sequence RKNFPRVSYITALDFY. A helical transmembrane segment spans residues 344–364; it reads IAICFVFCFCALLEFAVLNFL. Residues 365–485 are Cytoplasmic-facing; the sequence is IYNQTKAHAS…HVYRLDNYSR (121 aa). The tract at residues 413–438 is disordered; that stretch reads EGSDGEERPSCSAQQPPSPGSPEGPR. A helical transmembrane segment spans residues 486–506; that stretch reads VVFPVTFFFFNVLYWLVCLNL.

It belongs to the ligand-gated ion channel (TC 1.A.9) family. Gamma-aminobutyric acid receptor (TC 1.A.9.5) subfamily. GABRE sub-subfamily. As to quaternary structure, heteropentamer, formed by a combination of alpha (GABRA1-6), beta (GABRB1-3), gamma (GABRG1-3), delta (GABRD), epsilon (GABRE), rho (GABRR1-3), pi (GABRP) and theta (GABRQ) chains, each subunit exhibiting distinct physiological and pharmacological properties. As to expression, expressed in many tissues. Highest levels of expression in adult heart and placenta.

The protein resides in the cell membrane. It localises to the postsynaptic cell membrane. The enzyme catalyses chloride(in) = chloride(out). Potentiated by pentobarbital, loreclezole, and lanthanum and inhibited by zinc and furosemide. Introduction of the epsilon subunit to the receptor complex resulted in diminished modulatory effects by etomidate, propofol, pregnanolone and flurazepam. Functionally, epsilon subunit of the heteropentameric ligand-gated chloride channel gated by gamma-aminobutyric acid (GABA), a major inhibitory neurotransmitter in the brain. GABA-gated chloride channels, also named GABA(A) receptors (GABAAR), consist of five subunits arranged around a central pore and contain GABA active binding site(s) located at the alpha and beta subunit interfaces. When activated by GABA, GABAARs selectively allow the flow of chloride anions across the cell membrane down their electrochemical gradient. GABAARs containing epsilon subunits also permit spontaneous chloride channel activity while preserving the structural information required for GABA-gated openings. GABARs containing epsilon subunit may regulate cardiac function. This Homo sapiens (Human) protein is Gamma-aminobutyric acid receptor subunit epsilon.